A 743-amino-acid polypeptide reads, in one-letter code: Merozoite surface protein 9 (743 aa).

A signal peptide spans 1–23 (MMNMKIVLFSLLLFVIRWNIISC). The segment at 77–235 (KELLKEKQYT…VNDEDDVNDE (159 aa)) is interaction with MSP1 and host SLC4A1/Band 3. Disordered stretches follow at residues 202–282 (KSQG…ATAY), 459–487 (DNQA…PTED), 512–540 (NNTP…ENFD), and 666–743 (VDAL…EESK). The segment covering 211 to 224 (SQNQNENNDNQKYQ) has biased composition (polar residues). Repeat copies occupy residues 226-231 (VNDEDD), 232-237 (VNDEED), 238-243 (TNDDED), 244-249 (TNDEED), 250-255 (TNDDED), 256-261 (TNDDED), 262-267 (TNDEED), and 268-273 (TNDEED). The 8 X 6 AA tandem repeats of [VT]-N-D-[ED]-[ED]-D stretch occupies residues 226–273 (VNDEDDVNDEEDTNDDEDTNDEEDTNDDEDTNDDEDTNDEEDTNDEED). The span at 226 to 274 (VNDEDDVNDEEDTNDDEDTNDEEDTNDDEDTNDDEDTNDEEDTNDEEDH) shows a compositional bias: acidic residues. Residues 364–528 (LKDNLINYEF…PPTQSKKKNK (165 aa)) are interaction with MSP1 and host SLC4A1/Band 3. The span at 459–473 (DNQAVDTKSMEEPKV) shows a compositional bias: basic and acidic residues. Over residues 512 to 521 (NNTPNVVPPT) the composition is skewed to low complexity. Residues 644 to 732 (NQETEEEMEK…EEQEEEEEEI (89 aa)) are a coiled coil. A compositionally biased stretch (basic and acidic residues) spans 672 to 722 (KNKEEEEKEKEKEKEKEEKEKEEKEKEEKEKEKEEKEKEKEEKEEEKKEKE). Residues 723–733 (EEQEEEEEEIV) show a composition bias toward acidic residues.

This sequence belongs to the plasmodium ABRA family. Forms a complex composed of MSP1, MSP6, MSP7, MSP9 and MSP3; within the complex, MSP6 and MSP9 mediate the binding to the host erythrocyte. Interacts with MSP1 subunits p19 and p42; the interaction is direct. Interacts with host SLC4A1/Band 3 protein (via the 5ABC region). MSP1 subunits p19 or p42, and MSP9 form a co-ligand complex that interacts with host SLC4A1/Band 3 protein. Not glycosylated.

Its subcellular location is the cell membrane. It is found in the parasitophorous vacuole lumen. The protein resides in the secreted. Its function is as follows. During the asexual blood stage, involved in the sialic acid-independent (SAID) merozoite invasion of host erythrocytes by binding to host SLC4A1/Band 3 protein on the surface of the host erythrocyte. This chain is Merozoite surface protein 9, found in Plasmodium falciparum (isolate Camp / Malaysia).